A 246-amino-acid polypeptide reads, in one-letter code: Probable septum site-determining protein MinC (246 aa).

The protein belongs to the MinC family. Interacts with MinD and FtsZ.

Cell division inhibitor that blocks the formation of polar Z ring septums. Rapidly oscillates between the poles of the cell to destabilize FtsZ filaments that have formed before they mature into polar Z rings. Prevents FtsZ polymerization. In Pseudomonas savastanoi pv. phaseolicola (strain 1448A / Race 6) (Pseudomonas syringae pv. phaseolicola (strain 1448A / Race 6)), this protein is Probable septum site-determining protein MinC.